The following is a 506-amino-acid chain: PHD finger protein 10 (506 aa).

Disordered stretches follow at residues 1 to 66 (MAAV…QDFG) and 293 to 377 (DPEL…SVSG). The segment covering 23–35 (VKEDNSNDTKDPE) has biased composition (basic and acidic residues). Residues 52 to 66 (GDSTPSCENSNQDFG) are compositionally biased toward polar residues. Residues 90–299 (MLQEQVSEYL…DPLDPELLAL (210 aa)) are SAY. Residues 326–338 (SIDSSSMNMSESD) are compositionally biased toward low complexity. Positions 353 to 367 (KVKEKSSTPRKEGSK) are enriched in basic and acidic residues. The segment at 387–444 (ICGICLKGKDANKKGRSERLIHCSQCDNSGHPSCLDMSAELVAVIKKYPWQCMECKTC) adopts a PHD-type 1; degenerate zinc-finger fold. The PHD-type 2; degenerate zinc-finger motif lies at 446-489 (ICGQPHHEEEMMFCDTCDRGYHTFCVGLGALPSGRWICDCCQKV).

This sequence belongs to the SAYP family. In terms of assembly, component of neural progenitors-specific chromatin remodeling complex (npBAF complex), a subfamily of ATP-dependent SWI/SNF chromatin remodeling complexes.

The protein resides in the nucleus. Functionally, involved in transcription activity regulation by chromatin remodeling in the context of the neural progenitors-specific chromatin remodeling complex (npBAF complex). May play a role in the proliferation of neural progenitors. In Xenopus laevis (African clawed frog), this protein is PHD finger protein 10 (phf10).